The following is a 293-amino-acid chain: Cytidine deaminase 8 (293 aa).

2 CMP/dCMP-type deaminase domains span residues 20–151 and 181–293; these read FTPQ…LISQ and EHCN…LHCK. 61-63 contacts substrate; sequence NVE. His-74 is a Zn(2+) binding site. Glu-76 (proton donor) is an active-site residue. The Zn(2+) site is built by Cys-107 and Cys-110.

Belongs to the cytidine and deoxycytidylate deaminase family. In terms of assembly, homodimer. It depends on Zn(2+) as a cofactor.

The enzyme catalyses cytidine + H2O + H(+) = uridine + NH4(+). The catalysed reaction is 2'-deoxycytidine + H2O + H(+) = 2'-deoxyuridine + NH4(+). This enzyme scavenges exogenous and endogenous cytidine and 2'-deoxycytidine for UMP synthesis. In Arabidopsis thaliana (Mouse-ear cress), this protein is Cytidine deaminase 8 (CDA8).